A 467-amino-acid chain; its full sequence is MSQEINQKSQEVRVRFAPSPTGYLHVGGARTALFNWLFARKNNGKFVLRIEDTDTERSTRESEQMIMNDLKWLGLYWDEGPDIGGNYGPYRQSERLEIYKKYAYELVEKGYAYFAIYDENDPKKVIEKTTKEPKTKNPFTVVFKVPENKVIAFDDMLKGRIEFSTEHMEDFIILKSNGYSVYNYAVVIDDHFMNITHVLRGEDHISNTPKQLLLYEAFGWEQPKFMHIPLILGADKTPLSKRHGATAVEHFRKEGYLPKALVNYLAILGWSVDEEIFDYTQKVQSFMPEQISNKNVVFDYQKLEWVNGKHMRTLSLDELMKYFKEWQEFTEKKFEIPEKVIEISREKVNTLKQLYEFTLPFVDDNYEYSNDYIEKFLKKPEAIHILELGMKKFSDLNDYTIENVEKVLREIAIELNLGTNKVFQTIRGAVLGRLVTPGLFESIAVLGKEKTLSRIRRTIGMISTIGG.

The short motif at 18-28 (PSPTGYLHVGG) is the 'HIGH' region element. The 'KMSKS' region signature appears at 238 to 242 (PLSKR). ATP is bound at residue lysine 241.

It belongs to the class-I aminoacyl-tRNA synthetase family. Glutamate--tRNA ligase type 1 subfamily. Monomer.

The protein localises to the cytoplasm. The enzyme catalyses tRNA(Glu) + L-glutamate + ATP = L-glutamyl-tRNA(Glu) + AMP + diphosphate. Catalyzes the attachment of glutamate to tRNA(Glu) in a two-step reaction: glutamate is first activated by ATP to form Glu-AMP and then transferred to the acceptor end of tRNA(Glu). The sequence is that of Glutamate--tRNA ligase 2 from Fervidobacterium nodosum (strain ATCC 35602 / DSM 5306 / Rt17-B1).